The following is a 337-amino-acid chain: Monoacylglycerol lipase abhd6-A (337 aa).

The Extracellular segment spans residues 1–19 (MDLDVLNMFLVAGGTLLVP). A helical; Signal-anchor for type II membrane protein transmembrane segment spans residues 20-42 (ILAFVTSFLLWPAALIKIYYWYW). Over 43 to 337 (RRALGMQVKF…QSTENNKKHE (295 aa)) the chain is Cytoplasmic. The region spanning 73–313 (SVLMLHGFSA…CGHSVVMERP (241 aa)) is the AB hydrolase-1 domain. The active-site Nucleophile is Ser148. Residues Asp278 and His306 each act as charge relay system in the active site.

It belongs to the AB hydrolase superfamily.

Its subcellular location is the late endosome membrane. The protein resides in the lysosome membrane. It localises to the mitochondrion membrane. It carries out the reaction Hydrolyzes glycerol monoesters of long-chain fatty acids.. It catalyses the reaction 1-octanoylglycerol + H2O = octanoate + glycerol + H(+). The catalysed reaction is 1-decanoylglycerol + H2O = decanoate + glycerol + H(+). The enzyme catalyses 1-dodecanoylglycerol + H2O = dodecanoate + glycerol + H(+). It carries out the reaction 1-tetradecanoylglycerol + H2O = tetradecanoate + glycerol + H(+). It catalyses the reaction 2-hexadecanoylglycerol + H2O = glycerol + hexadecanoate + H(+). The catalysed reaction is 2-(9Z-octadecenoyl)-glycerol + H2O = glycerol + (9Z)-octadecenoate + H(+). The enzyme catalyses 1-(9Z-octadecenoyl)-glycerol + H2O = glycerol + (9Z)-octadecenoate + H(+). It carries out the reaction 2-(9Z,12Z-octadecadienoyl)-glycerol + H2O = (9Z,12Z)-octadecadienoate + glycerol + H(+). It catalyses the reaction 2-(5Z,8Z,11Z,14Z-eicosatetraenoyl)-glycerol + H2O = glycerol + (5Z,8Z,11Z,14Z)-eicosatetraenoate + H(+). The catalysed reaction is 1-(5Z,8Z,11Z,14Z-eicosatetraenoyl)-glycerol + H2O = glycerol + (5Z,8Z,11Z,14Z)-eicosatetraenoate + H(+). The enzyme catalyses 1-(9Z,12Z-octadecadienoyl)-glycerol + H2O = (9Z,12Z)-octadecadienoate + glycerol + H(+). It carries out the reaction 3-(9Z-octadecenoyl)-sn-glycero-1-phospho-(3'-(9Z-octadecenoyl)-1'-sn-glycerol) + H2O = 3-(9Z-octadecenoyl)-sn-glycero-1-phospho-(1'-sn-glycerol) + (9Z)-octadecenoate + H(+). It catalyses the reaction (S,S)-2-(9Z-octadecenoyl)-sn-glycero-1-phospho-(2'-(9Z-octadecenoyl)-1'-sn-glycerol) + H2O = (S,S)-2-(9Z-octadecenoyl)-sn-glycero-1-phospho-(1'-sn-glycerol) + (9Z)-octadecenoate + H(+). The catalysed reaction is (R,R)-2-(9Z-octadecenoyl)-sn-glycero-3-phospho-(2'-(9Z-octadecenoyl)-3'-sn-glycerol) + H2O = (R,R)-2-(9Z-octadecenoyl)-sn-glycero-3-phospho-(3'-sn-glycerol) + (9Z)-octadecenoate + H(+). Its function is as follows. Lipase that preferentially hydrolysis medium-chain saturated monoacylglycerols including 2-arachidonoylglycerol. Through 2-arachidonoylglycerol degradation may regulate endocannabinoid signaling pathways. Also has a lysophosphatidyl lipase activity with a preference for lysophosphatidylglycerol among other lysophospholipids. Also able to degrade bis(monoacylglycero)phosphate (BMP) and constitutes the major enzyme for BMP catabolism. BMP, also known as lysobisphosphatidic acid, is enriched in late endosomes and lysosomes and plays a key role in the formation of intraluminal vesicles and in lipid sorting. The sequence is that of Monoacylglycerol lipase abhd6-A (abhd6-a) from Xenopus laevis (African clawed frog).